A 71-amino-acid chain; its full sequence is Small ribosomal subunit protein bS21 (71 aa).

The disordered stretch occupies residues 39–71; that stretch reads EKPTTVRKRAKAAAQKRHAKKLARENARRVRLY. Positions 43–59 are enriched in basic residues; sequence TVRKRAKAAAQKRHAKK. A compositionally biased stretch (basic and acidic residues) spans 60–71; that stretch reads LARENARRVRLY.

The protein belongs to the bacterial ribosomal protein bS21 family.

The polypeptide is Small ribosomal subunit protein bS21 (Vibrio atlanticus (strain LGP32) (Vibrio splendidus (strain Mel32))).